The sequence spans 299 residues: Bifunctional protein FolD 2 (299 aa).

The protein belongs to the tetrahydrofolate dehydrogenase/cyclohydrolase family. Homodimer.

The catalysed reaction is (6R)-5,10-methylene-5,6,7,8-tetrahydrofolate + NADP(+) = (6R)-5,10-methenyltetrahydrofolate + NADPH. It catalyses the reaction (6R)-5,10-methenyltetrahydrofolate + H2O = (6R)-10-formyltetrahydrofolate + H(+). It participates in one-carbon metabolism; tetrahydrofolate interconversion. Catalyzes the oxidation of 5,10-methylenetetrahydrofolate to 5,10-methenyltetrahydrofolate and then the hydrolysis of 5,10-methenyltetrahydrofolate to 10-formyltetrahydrofolate. The polypeptide is Bifunctional protein FolD 2 (FOLD2) (Arabidopsis thaliana (Mouse-ear cress)).